The chain runs to 220 residues: MNNTKNKSDWQLFLEDYRFYHEKEFDWITYLNHCLNSYPDFDILKFIRKYGPECEKSFLSLQSKTKADVYGVFTKQIKAGSVNEVLAQKLVQLDALRTNYLIGALYSTNKTQKKLFKQSWKNAKKQGYTKQEWLMTLVGLPFEKGEYHKQLYAHSRQEILDLVEAVKKLYLRPEKDDKLEFADSSKVSESKSIKVTNAVTLPSDDLDKELFEFSGEGGDE.

This is an uncharacterized protein from Mycoplasma pneumoniae (strain ATCC 29342 / M129 / Subtype 1) (Mycoplasmoides pneumoniae).